The sequence spans 116 residues: ATP-dependent Clp protease adapter protein ClpS (116 aa).

The span at 1 to 11 (MRRFNTIMQGK) shows a compositional bias: polar residues. The segment at 1–23 (MRRFNTIMQGKTNGGNGPESGTV) is disordered.

The protein belongs to the ClpS family. In terms of assembly, binds to the N-terminal domain of the chaperone ClpA.

Its function is as follows. Involved in the modulation of the specificity of the ClpAP-mediated ATP-dependent protein degradation. The polypeptide is ATP-dependent Clp protease adapter protein ClpS (Brucella melitensis biotype 2 (strain ATCC 23457)).